The primary structure comprises 65 residues: uncharacterized protein (65 aa).

This is an uncharacterized protein from Acidianus filamentous virus 1 (isolate United States/Yellowstone) (AFV-1).